Reading from the N-terminus, the 77-residue chain is Acyl carrier protein (77 aa).

The region spanning 2 to 77 (ADVMERVTKI…DVVDYINNNQ (76 aa)) is the Carrier domain. Position 37 is an O-(pantetheine 4'-phosphoryl)serine (Ser37).

The protein belongs to the acyl carrier protein (ACP) family. Post-translationally, 4'-phosphopantetheine is transferred from CoA to a specific serine of apo-ACP by AcpS. This modification is essential for activity because fatty acids are bound in thioester linkage to the sulfhydryl of the prosthetic group.

The protein localises to the cytoplasm. The protein operates within lipid metabolism; fatty acid biosynthesis. Carrier of the growing fatty acid chain in fatty acid biosynthesis. The polypeptide is Acyl carrier protein (Shouchella clausii (strain KSM-K16) (Alkalihalobacillus clausii)).